Here is a 312-residue protein sequence, read N- to C-terminus: Putative S-adenosyl-L-methionine-dependent methyltransferase BCG_1768c (312 aa).

Residues Asp130 and 159-160 (DL) contribute to the S-adenosyl-L-methionine site.

It belongs to the UPF0677 family.

Its function is as follows. Exhibits S-adenosyl-L-methionine-dependent methyltransferase activity. The sequence is that of Putative S-adenosyl-L-methionine-dependent methyltransferase BCG_1768c from Mycobacterium bovis (strain BCG / Pasteur 1173P2).